The sequence spans 462 residues: Toxin CqTX-A (462 aa).

Positions 1–19 (MANMLYFSLLALLFMTGIA) are cleaved as a signal peptide. Asn-174 carries an N-linked (GlcNAc...) asparagine glycan.

Belongs to the jellyfish toxin family. Type I subfamily. In terms of processing, contains disulfide bonds. Post-translationally, N-glycosylated.

The protein resides in the secreted. It is found in the nematocyst. The protein localises to the target cell membrane. Critical allergen and main toxic protein of C.quadrigatus venom. Has potent hemolytic activity. Is lethal to crayfish. Causes cutaneous inflammation in humans. May act as a pore-forming toxin, disrupting normal transmembrane ion concentration gradients in susceptible cells. This Chiropsoides quadrigatus (Box jellyfish) protein is Toxin CqTX-A.